The chain runs to 374 residues: Chorismate synthase (374 aa).

Arg-55 lines the NADP(+) pocket. FMN-binding positions include 132–134, Gly-293, 308–312, and Arg-335; these read RGS and KPTPS.

This sequence belongs to the chorismate synthase family. FMNH2 is required as a cofactor.

The enzyme catalyses 5-O-(1-carboxyvinyl)-3-phosphoshikimate = chorismate + phosphate. It participates in metabolic intermediate biosynthesis; chorismate biosynthesis; chorismate from D-erythrose 4-phosphate and phosphoenolpyruvate: step 7/7. In terms of biological role, catalyzes the anti-1,4-elimination of the C-3 phosphate and the C-6 proR hydrogen from 5-enolpyruvylshikimate-3-phosphate (EPSP) to yield chorismate, which is the branch point compound that serves as the starting substrate for the three terminal pathways of aromatic amino acid biosynthesis. This reaction introduces a second double bond into the aromatic ring system. This chain is Chorismate synthase, found in Methanothermobacter thermautotrophicus (strain ATCC 29096 / DSM 1053 / JCM 10044 / NBRC 100330 / Delta H) (Methanobacterium thermoautotrophicum).